Consider the following 291-residue polypeptide: Beta-lactamase CTX-M-8 (291 aa).

An N-terminal signal peptide occupies residues 1 to 30 (MMRHRVKRMMLMTTACISLLLGSAPLYAQA). Ser73 (nucleophile; acyl-ester intermediate) is an active-site residue. Lys76, Ser133, Glu169, and Ser240 together coordinate a beta-lactam.

Belongs to the class-A beta-lactamase family. In terms of assembly, monomer.

It localises to the secreted. The enzyme catalyses a beta-lactam + H2O = a substituted beta-amino acid. With respect to regulation, inhibited by the beta-lactamase-blocking agents clavulanic acid, tazobactam and sulbactam; in the DH5alpha strain of E.coli. In terms of biological role, extended-spectrum beta-lactamase (ESBL) which confers resistance to penicillins, as well as first, third and fourth-generation cephalosporins. Has cefotaxime-hydrolyzing activity. Inactive against cephalosporin antibiotic, cefoxitin, and the carbapenem, imipenem. This Citrobacter amalonaticus protein is Beta-lactamase CTX-M-8.